The chain runs to 633 residues: MVSHQFLPYLDYIKICLASPERIRVWAQRILPNGQIVGEVTKPETINYRTLKPEMDGLFCERIFGPIKNWECHCGKYKRIKDKGIICERCGVEVTESKVRRHRMGYIELSAPVVHIWYLKGMPSYISVFLDMAAKEIEQVVYFNTYIITHSTAENKQIKYKQLLTEDEWVLIEDQIYRNEIQGEIEIGIGASAILKMLKDLDLSLESDLLRTKLVNLKAVKKDKIMKRLRIIDNFMVTGASPSWMVLNVIPVISPDLRPMVQLDGGRFATSDLNDLYRRVINRNNRLKRLEEILAPEIIIRNEKRMLQEAVDALIDNGRRGRVVVGANNRALKSLSNIIEGKQGRFRQNLLGKRVDYSGRSVIVVGPDLKLNECGIPKEMAIELFQPFLIHQIIKEGLANNMKSAKKLMQKHTSVTIELLQKIIKWHPVLLNRAPTLHRLGIQAFDPVLVDGRAIRLHPLVCPAFNADFDGDQMAVHIPLSIEAQTEARLLMLAPNNFLSPATGQPIITPSQDMVLGCYYLTNNNLANQKGSGHYFSSFEDAIIAYKQKLISLHAFIWVKFYGTINNLDIGRFIKSTLCKNKLTTTDYYENLQVKKDIEGTITCQFIKTSVGRIFFNIAISGNLFFSTSNHNK.

Zn(2+)-binding residues include cysteine 72, cysteine 74, cysteine 87, and cysteine 90. The Mg(2+) site is built by aspartate 468, aspartate 470, and aspartate 472.

It belongs to the RNA polymerase beta' chain family. RpoC1 subfamily. In terms of assembly, in plastids the minimal PEP RNA polymerase catalytic core is composed of four subunits: alpha, beta, beta', and beta''. When a (nuclear-encoded) sigma factor is associated with the core the holoenzyme is formed, which can initiate transcription. It depends on Mg(2+) as a cofactor. The cofactor is Zn(2+).

It is found in the plastid. Its subcellular location is the chloroplast. The catalysed reaction is RNA(n) + a ribonucleoside 5'-triphosphate = RNA(n+1) + diphosphate. Functionally, DNA-dependent RNA polymerase catalyzes the transcription of DNA into RNA using the four ribonucleoside triphosphates as substrates. In Cyanidium caldarium (Red alga), this protein is DNA-directed RNA polymerase subunit beta'.